A 657-amino-acid polypeptide reads, in one-letter code: uncharacterized protein (657 aa).

Phosphoserine is present on serine 114. Disordered stretches follow at residues 142–216 (LASQ…SDEE), 228–248 (SSRE…EEEE), 291–312 (STRS…SHTP), 335–354 (SSPG…EGAD), and 399–522 (AEAS…SGRH). A compositionally biased stretch (polar residues) spans 143–169 (ASQNTDKTSQNQARELPVTENNAQNAK). The segment covering 190-206 (AGKERTLQTPKQKEPAR) has biased composition (basic and acidic residues). A Phosphoserine modification is found at serine 213. Composition is skewed to polar residues over residues 234–243 (TNQGFSSANV) and 301–312 (SHVSSDTASHTP). The segment covering 343–354 (ETVDEPVSEGAD) has biased composition (acidic residues). Positions 437-451 (SASSASAIQQDSTSS) are enriched in low complexity. The segment covering 462–484 (NTVSSAYSEDFENSPSLTASEPT) has biased composition (polar residues). Positions 485 to 495 (AHSKESLDRTL) are enriched in basic and acidic residues. A compositionally biased stretch (polar residues) spans 499-513 (SESSSSVKTDLPQTA).

This is an uncharacterized protein from Homo sapiens (Human).